A 133-amino-acid chain; its full sequence is UPF0134 protein MPN_151 (133 aa).

It belongs to the UPF0134 family.

The protein is UPF0134 protein MPN_151 of Mycoplasma pneumoniae (strain ATCC 29342 / M129 / Subtype 1) (Mycoplasmoides pneumoniae).